Consider the following 875-residue polypeptide: Cell surface glycoprotein (875 aa).

The signal sequence occupies residues 1–23; sequence MTNTKQKINAVFLSALMVMSVFA. Residues 137 to 157 are compositionally biased toward polar residues; the sequence is EVQNGGSGDVTGSTLQTSSSG. Disordered regions lie at residues 137–158 and 197–217; these read EVQN…SSGP and LPTA…DFDV. Residues 205-216 are compositionally biased toward low complexity; the sequence is DNGASGSNGDFD. An N-linked (GlcNAc...) asparagine glycan is attached at Asn-253. The disordered stretch occupies residues 380–414; sequence YPASDSSNDGYASGGSHASSVTVRDTDGDGTDDSE. Residues 383-402 are compositionally biased toward polar residues; that stretch reads SDSSNDGYASGGSHASSVTV. N-linked (GlcNAc...) asparagine glycosylation is found at Asn-455, Asn-563, Asn-715, and Asn-774. The interval 794 to 852 is disordered; it reads EAGSLEEEQPDTETPEPDTETPEPDTETPEPDTETPEPDTETPEPDTETEEATTEASGP. Acidic residues predominate over residues 797–846; it reads SLEEEQPDTETPEPDTETPEPDTETPEPDTETPEPDTETPEPDTETEEAT. The helical transmembrane segment at 851–875 threads the bilayer; that stretch reads GPGFTAAIALIALVAAALLAVRRDN. The short motif at 852–854 is the PGF sorting signal element; sequence PGF.

Belongs to the halobacterial S-layer protein family. Post-translationally, asn-455 is glycosylated by a pentasaccharide comprising a hexose, 2 hexuronic acids, a methyl ester of a hexuronic acid and a final hexose. The complete pentasaccharide is first assembled on dolichol phosphate and then transferred the glycan to the target Asn. Cleaved by the archaeosortase ArtA at the C-terminus, with removal of a short hydrophobic segment. In terms of processing, lipidation.

The protein resides in the secreted. The protein localises to the cell wall. It is found in the S-layer. It localises to the cell membrane. S-layer protein. The S-layer is a paracrystalline mono-layered assembly of proteins which coat the surface of the cell. The protein is Cell surface glycoprotein (csg1) of Haloarcula marismortui (strain ATCC 43049 / DSM 3752 / JCM 8966 / VKM B-1809) (Halobacterium marismortui).